Here is a 143-residue protein sequence, read N- to C-terminus: Large ribosomal subunit protein uL11 (143 aa).

This sequence belongs to the universal ribosomal protein uL11 family. Part of the ribosomal stalk of the 50S ribosomal subunit. Interacts with L10 and the large rRNA to form the base of the stalk. L10 forms an elongated spine to which L12 dimers bind in a sequential fashion forming a multimeric L10(L12)X complex. One or more lysine residues are methylated.

Functionally, forms part of the ribosomal stalk which helps the ribosome interact with GTP-bound translation factors. The sequence is that of Large ribosomal subunit protein uL11 from Janthinobacterium sp. (strain Marseille) (Minibacterium massiliensis).